The chain runs to 346 residues: Protein STAR1 (346 aa).

The disordered stretch occupies residues 23 to 48 (QRPPPNGTVHACSKSRPPQLEPGKVG). The 233-residue stretch at 112–344 (IRVRGLTRRS…KHPMARRFLE (233 aa)) folds into the ABC transporter domain. 146-153 (GPSGSGKS) contacts ATP.

This sequence belongs to the ABC transporter superfamily. ABCI family. Interacts with STAR2. Expressed in roots.

It is found in the membrane. Associates with STAR2 to form a functional transmembrane ABC transporter required for detoxification of aluminum (Al) in roots. Can specifically transport UDP-glucose. The sequence is that of Protein STAR1 from Oryza sativa subsp. japonica (Rice).